A 479-amino-acid chain; its full sequence is Calcium/calmodulin-dependent protein kinase type II delta chain (479 aa).

Residues 14–272 enclose the Protein kinase domain; sequence YQLFEELGKG…ASEALKHPWI (259 aa). Residues 20 to 28 and K43 contribute to the ATP site; that span reads LGKGAFSVV. Catalysis depends on D136, which acts as the Proton acceptor. T287 is subject to Phosphothreonine. A phosphoserine mark is found at S315 and S319. The residue at position 337 (T337) is a Phosphothreonine.

This sequence belongs to the protein kinase superfamily. CAMK Ser/Thr protein kinase family. CaMK subfamily. In terms of assembly, CAMK2 is composed of four different chains: alpha, beta, gamma, and delta. The different isoforms assemble into homo- or heteromultimeric holoenzymes composed of 8 to 12 subunits.

The catalysed reaction is L-seryl-[protein] + ATP = O-phospho-L-seryl-[protein] + ADP + H(+). It catalyses the reaction L-threonyl-[protein] + ATP = O-phospho-L-threonyl-[protein] + ADP + H(+). With respect to regulation, autophosphorylation of CAMK2 plays an important role in the regulation of the kinase activity. Its function is as follows. CaM-kinase II (CAMK2) is a prominent kinase in the central nervous system. The sequence is that of Calcium/calmodulin-dependent protein kinase type II delta chain (CAMK2D) from Gallus gallus (Chicken).